Consider the following 158-residue polypeptide: SsrA-binding protein (158 aa).

Belongs to the SmpB family.

It is found in the cytoplasm. In terms of biological role, required for rescue of stalled ribosomes mediated by trans-translation. Binds to transfer-messenger RNA (tmRNA), required for stable association of tmRNA with ribosomes. tmRNA and SmpB together mimic tRNA shape, replacing the anticodon stem-loop with SmpB. tmRNA is encoded by the ssrA gene; the 2 termini fold to resemble tRNA(Ala) and it encodes a 'tag peptide', a short internal open reading frame. During trans-translation Ala-aminoacylated tmRNA acts like a tRNA, entering the A-site of stalled ribosomes, displacing the stalled mRNA. The ribosome then switches to translate the ORF on the tmRNA; the nascent peptide is terminated with the 'tag peptide' encoded by the tmRNA and targeted for degradation. The ribosome is freed to recommence translation, which seems to be the essential function of trans-translation. This chain is SsrA-binding protein, found in Caldicellulosiruptor saccharolyticus (strain ATCC 43494 / DSM 8903 / Tp8T 6331).